Reading from the N-terminus, the 146-residue chain is uncharacterized protein (146 aa).

The N-acetyltransferase domain occupies 7–146 (LQINYKTDEL…EGHDILIWNP (140 aa)).

This is an uncharacterized protein from Staphylococcus epidermidis (strain ATCC 12228 / FDA PCI 1200).